The sequence spans 503 residues: D-alanine--D-alanyl carrier protein ligase (503 aa).

151 to 152 (TS) is a binding site for ATP. D196 contacts D-alanine. ATP is bound at residue 291–296 (NTYGPT). V300 is a D-alanine binding site. 2 residues coordinate ATP: D382 and K491. K491 contributes to the D-alanine binding site.

This sequence belongs to the ATP-dependent AMP-binding enzyme family. DltA subfamily.

The protein localises to the cytoplasm. It catalyses the reaction holo-[D-alanyl-carrier protein] + D-alanine + ATP = D-alanyl-[D-alanyl-carrier protein] + AMP + diphosphate. It participates in cell wall biogenesis; lipoteichoic acid biosynthesis. Functionally, catalyzes the first step in the D-alanylation of lipoteichoic acid (LTA), the activation of D-alanine and its transfer onto the D-alanyl carrier protein (Dcp) DltC. In an ATP-dependent two-step reaction, forms a high energy D-alanyl-AMP intermediate, followed by transfer of the D-alanyl residue as a thiol ester to the phosphopantheinyl prosthetic group of the Dcp. D-alanylation of LTA plays an important role in modulating the properties of the cell wall in Gram-positive bacteria, influencing the net charge of the cell wall. This is D-alanine--D-alanyl carrier protein ligase from Bacillus velezensis (strain DSM 23117 / BGSC 10A6 / LMG 26770 / FZB42) (Bacillus amyloliquefaciens subsp. plantarum).